The chain runs to 335 residues: L-carnitine dehydrogenase (335 aa).

Residue 29 to 34 (GTGVIG) coordinates NAD(+).

This sequence belongs to the 3-hydroxyacyl-CoA dehydrogenase family. L-carnitine dehydrogenase subfamily. In terms of assembly, homodimer.

Its subcellular location is the cytoplasm. It catalyses the reaction carnitine + NAD(+) = 3-dehydrocarnitine + NADH + H(+). The protein operates within amine and polyamine metabolism; carnitine metabolism. Its function is as follows. Catalyzes the NAD(+)-dependent oxidation of L-carnitine to 3-dehydrocarnitine. This Streptomyces griseus subsp. griseus (strain JCM 4626 / CBS 651.72 / NBRC 13350 / KCC S-0626 / ISP 5235) protein is L-carnitine dehydrogenase.